Here is a 389-residue protein sequence, read N- to C-terminus: Acetyl-CoA:oxalate CoA-transferase (389 aa).

Residue H237 is part of the active site.

As to quaternary structure, homodimer.

It carries out the reaction oxalate + acetyl-CoA = oxalyl-CoA + acetate. Its function is as follows. Involved in the catabolism of oxalate and in the adapatation to low pH. ACOCT serves to prime the oxalate-induced acid tolerance response (ATR) cycle by producing substrate for oxalyl-CoA decarboxylase (OXC) and formyl-coenzyme A transferase (FCOCT). Catalyzes the reversible conversion of acetyl-CoA and oxalate to oxalyl-CoA and acetate. It can also use formyl-CoA and oxalate to produce oxalyl-CoA and formate with significantly reduced specific activity. This is Acetyl-CoA:oxalate CoA-transferase (uctC) from Acetobacter aceti.